The chain runs to 1884 residues: Fatty acid synthase subunit alpha (1884 aa).

A disordered region spans residues 91 to 141 (TPDPAEPPAAEEPKAETGKESAPAASAAAAAATQPAAAVAPPPQSAGPVES). Residues 111–129 (SAPAASAAAAAATQPAAAV) show a composition bias toward low complexity. One can recognise a Carrier domain in the interval 147 to 222 (VKASLLIHVL…EQFQDTFSGS (76 aa)). O-(pantetheine 4'-phosphoryl)serine is present on S182. Residues 583–613 (TEQTTQDALAIPTGSNTPTEEDELSTASDDD) are disordered. The segment covering 584–600 (EQTTQDALAIPTGSNTP) has biased composition (polar residues). A compositionally biased stretch (acidic residues) spans 601–613 (TEEDELSTASDDD). The interval 677-873 (DKYVLVTGAG…CGAIIGWTRG (197 aa)) is beta-ketoacyl reductase. One can recognise a Ketosynthase family 3 (KS3) domain in the interval 1120–1660 (IQEVVIQHDL…QKGAQAVVVH (541 aa)). Catalysis depends on for beta-ketoacyl synthase activity residues C1303, H1545, and H1586. 3 residues coordinate Mg(2+): D1770, V1771, and E1772. Acetyl-CoA is bound by residues 1770–1772 (DVE), Y1796, S1806, 1815–1825 (EATFKALGVSS), 1839–1842 (RDGN), and 1869–1871 (ISH). Residues S1870 and H1871 each coordinate Mg(2+).

The protein belongs to the thiolase-like superfamily. Fungal fatty acid synthetase subunit alpha family. In terms of assembly, fatty acid synthase is composed of alpha and beta subunits.

It catalyses the reaction acetyl-CoA + n malonyl-CoA + 2n NADPH + 4n H(+) = a long-chain-acyl-CoA + n CoA + n CO2 + 2n NADP(+).. The enzyme catalyses a fatty acyl-[ACP] + malonyl-[ACP] + H(+) = a 3-oxoacyl-[ACP] + holo-[ACP] + CO2. The catalysed reaction is a (3R)-hydroxyacyl-[ACP] + NADP(+) = a 3-oxoacyl-[ACP] + NADPH + H(+). In terms of biological role, fatty acid synthetase catalyzes the formation of long-chain fatty acids from acetyl-CoA, malonyl-CoA and NADPH. The alpha subunit contains domains for: acyl carrier protein, 3-oxoacyl-[acyl-carrier-protein] reductase, and 3-oxoacyl-[acyl-carrier-protein] synthase. The polypeptide is Fatty acid synthase subunit alpha (FAS2) (Candida parapsilosis (strain CDC 317 / ATCC MYA-4646) (Yeast)).